The chain runs to 587 residues: ASI1-immunoprecipitated protein 3 (587 aa).

Positions 1 to 118 (MVLSRRFAQV…NVTGKGKGKR (118 aa)) are disordered. Residues 66 to 98 (EDEDMAEGDDDQAEEETNPEAEEEEDEEEEEKP) are compositionally biased toward acidic residues. Positions 129–248 (NTYDLEVPVL…TVEKKLWKLT (120 aa)) constitute a BAH domain. The 150-residue stretch at 344–493 (HRDKCLGKLL…RMQMTSVRCS (150 aa)) folds into the TFIIS central domain. Disordered regions lie at residues 371–396 (EAKV…GKDE) and 539–587 (TDKP…KKPE). Positions 560-570 (ETNKPKDEALK) are enriched in basic and acidic residues. A compositionally biased stretch (polar residues) spans 571–581 (TNDSNADNNPE).

As to quaternary structure, interacts with MOM1. Component of the ASI1-AIPP1-EDM2 (AAE) RNA regulatory complex composed of at least AIPP1/EDM3, ASI1 and EDM2 and may contain CPL2, AIPP2 and AIPP3/BDT1. Part of the BAH-PHD bivalent histone reader complex that contains AIPP2, PAIPP2 and AIPP3/BDT1; the BAH-PHD module associates with CPL2 to form the BAH-PHD-CPL2 complex (BPC) for transcriptional repression. Binds directly to CPL2, PHD1, PAIPP2/PHD2, AIPP2/PHD3, PHD4, PHD5 and PHD6. As to expression, expressed ubiquitously.

The protein resides in the nucleus. In terms of biological role, transcriptional repressor. Together with PHD finger-containing proteins (e.g. PHD1, PAIPP2/PHD2, AIPP2/PHD3, PHD4, PHD5 and PHD6), cooperates to form a BAH-PHD bivalent histone reader complex able to read histone H3 lysine 27 trimethylation (H3K27me3) and low-methylated H3K4 histone marks in order to regulate transcription, especially to prevent early flowering; H3K27me3 reader of this complex. CPL2 is subsequently recruited to form a BAH-PHD-CPL2 complex (BPC) in order to silence several H3K27me3 and low-methylated H3K4 enriched loci, including AGO5, via the phosphorylation state-dependent inhibition of Pol II release from the transcriptional start site (e.g. Ser5P-Pol II dephosphorylation). The BPC complex represses flowering by inhibiting the expression of several genes, including AGL6, FT, FUL and SOC1. Prevents the accumulation of intronic heterochromatin-containing genes (e.g. IBM1, At3g05410 and RPP7). Seems to not be involved in vernalization establishment, by contrast to orthologs in grass plants. This is ASI1-immunoprecipitated protein 3 from Arabidopsis thaliana (Mouse-ear cress).